The primary structure comprises 109 residues: Phosphoribosyl-ATP pyrophosphatase (109 aa).

The protein belongs to the PRA-PH family.

It localises to the cytoplasm. It carries out the reaction 1-(5-phospho-beta-D-ribosyl)-ATP + H2O = 1-(5-phospho-beta-D-ribosyl)-5'-AMP + diphosphate + H(+). The protein operates within amino-acid biosynthesis; L-histidine biosynthesis; L-histidine from 5-phospho-alpha-D-ribose 1-diphosphate: step 2/9. The sequence is that of Phosphoribosyl-ATP pyrophosphatase from Sphingopyxis alaskensis (strain DSM 13593 / LMG 18877 / RB2256) (Sphingomonas alaskensis).